Consider the following 417-residue polypeptide: Putative nickel insertion protein (417 aa).

The disordered stretch occupies residues 69-99 (HEHHHDHGHHHHGHGHHHDHTHDHHHHHEHR). The segment covering 74-99 (DHGHHHHGHGHHHDHTHDHHHHHEHR) has biased composition (basic residues).

This sequence belongs to the LarC family.

The protein is Putative nickel insertion protein of Maridesulfovibrio salexigens (strain ATCC 14822 / DSM 2638 / NCIMB 8403 / VKM B-1763) (Desulfovibrio salexigens).